Reading from the N-terminus, the 62-residue chain is Snaclec aspercetin subunit alpha (62 aa).

Cys2 and Cys13 are disulfide-bonded. The region spanning 9 to 62 (YEGHCYRFFHPPKDWADAERFCTEQAKGGALVSIQRFGEEDFVSNLITKNLQRG) is the C-type lectin domain.

It belongs to the snaclec family. Heterodimer; disulfide-linked. Expressed by the venom gland.

Its subcellular location is the secreted. Snaclec that binds to von Willebrand factor (VWF) and induces its interaction with GPIbalpha (GP1BA) (via the vWF A1 domain), resulting in platelet aggregation. Intravenous injection in mice induces a dose-dependent drop in platelet count (thrombocytopenia). Pretreatment by intravenous injection by this protein in mice potentiates the hemorrhagic lesion in the skin provoked by the metalloproteinase BaP1 intradermally injected. This result is not observed when both BaP1 and this protein are injected simultaneously. The chain is Snaclec aspercetin subunit alpha from Bothrops asper (Terciopelo).